The sequence spans 941 residues: Coiled-coil domain-containing protein 39 (941 aa).

Coiled coils occupy residues 16-122, 164-273, 306-605, and 665-825; these read AIPV…ENGI, AQQD…ESEI, QLKG…EIKV, and IKAA…EEQD. The disordered stretch occupies residues 868–941; that stretch reads PTASTKGSRQ…SNVKSKKSSK (74 aa). Composition is skewed to low complexity over residues 871 to 903 and 914 to 934; these read STKGSRQSSRSPSHTSLSARSSRSTSTSTSQSS and SSSLVGSPSRPSSASSSSSNV. A phosphoserine mark is found at Ser892 and Ser900.

The protein belongs to the CCDC39 family. Mainly expressed in nasal brushings and, to a lesser extent, in lungs and testis.

It localises to the cytoplasm. The protein localises to the cytoskeleton. It is found in the cilium axoneme. Its function is as follows. Required for assembly of dynein regulatory complex (DRC) and inner dynein arm (IDA) complexes, which are responsible for ciliary beat regulation, thereby playing a central role in motility in cilia and flagella. Probably acts together with CCDC40 to form a molecular ruler that determines the 96 nanometer (nm) repeat length and arrangements of components in cilia and flagella. Not required for outer dynein arm complexes assembly. This is Coiled-coil domain-containing protein 39 from Homo sapiens (Human).